Consider the following 363-residue polypeptide: UDP-N-acetylglucosamine--N-acetylmuramyl-(pentapeptide) pyrophosphoryl-undecaprenol N-acetylglucosamine transferase (363 aa).

Residues 15–17 (TGG), Asn-127, Arg-163, Ser-191, Ile-244, 263–268 (ALTVSE), and Gln-288 each bind UDP-N-acetyl-alpha-D-glucosamine.

This sequence belongs to the glycosyltransferase 28 family. MurG subfamily.

The protein resides in the cell inner membrane. It carries out the reaction di-trans,octa-cis-undecaprenyl diphospho-N-acetyl-alpha-D-muramoyl-L-alanyl-D-glutamyl-meso-2,6-diaminopimeloyl-D-alanyl-D-alanine + UDP-N-acetyl-alpha-D-glucosamine = di-trans,octa-cis-undecaprenyl diphospho-[N-acetyl-alpha-D-glucosaminyl-(1-&gt;4)]-N-acetyl-alpha-D-muramoyl-L-alanyl-D-glutamyl-meso-2,6-diaminopimeloyl-D-alanyl-D-alanine + UDP + H(+). It participates in cell wall biogenesis; peptidoglycan biosynthesis. In terms of biological role, cell wall formation. Catalyzes the transfer of a GlcNAc subunit on undecaprenyl-pyrophosphoryl-MurNAc-pentapeptide (lipid intermediate I) to form undecaprenyl-pyrophosphoryl-MurNAc-(pentapeptide)GlcNAc (lipid intermediate II). This chain is UDP-N-acetylglucosamine--N-acetylmuramyl-(pentapeptide) pyrophosphoryl-undecaprenol N-acetylglucosamine transferase, found in Pectobacterium carotovorum subsp. carotovorum (strain PC1).